The following is a 318-amino-acid chain: Transaldolase (318 aa).

Lys-132 serves as the catalytic Schiff-base intermediate with substrate.

The protein belongs to the transaldolase family. Type 1 subfamily. In terms of assembly, homodimer.

The protein resides in the cytoplasm. It catalyses the reaction D-sedoheptulose 7-phosphate + D-glyceraldehyde 3-phosphate = D-erythrose 4-phosphate + beta-D-fructose 6-phosphate. The protein operates within carbohydrate degradation; pentose phosphate pathway; D-glyceraldehyde 3-phosphate and beta-D-fructose 6-phosphate from D-ribose 5-phosphate and D-xylulose 5-phosphate (non-oxidative stage): step 2/3. Its function is as follows. Transaldolase is important for the balance of metabolites in the pentose-phosphate pathway. This is Transaldolase from Shewanella sp. (strain MR-7).